The chain runs to 318 residues: Cyclic AMP receptor-like protein F (318 aa).

At 1 to 3 the chain is on the extracellular side; it reads MKD. Residues 4 to 24 traverse the membrane as a helical segment; it reads IILIYMICAPISMIGSLFIII. At 25–38 the chain is on the cytoplasmic side; it reads TWLLYAKLKNSGSN. The chain crosses the membrane as a helical span at residues 39–59; the sequence is FIFFQAISDFFFTSKYIITII. Topologically, residues 60 to 83 are extracellular; that stretch reads FYYINIPQFSDETSSTDTNPYCFS. An intrachain disulfide couples cysteine 81 to cysteine 177. Residues 84–104 form a helical membrane-spanning segment; that stretch reads LGLFSQFFGQATIMWSYTMTV. The Cytoplasmic portion of the chain corresponds to 105–145; the sequence is KVFHSYFEMKKKNNNNNIGSNNIGGGGGGNNSNKQNSIDKT. Residues 146–166 traverse the membrane as a helical segment; sequence LKWYHLFVWGFCLVNATIIGI. Topologically, residues 167 to 187 are extracellular; that stretch reads SKQYGPSSTGCWIVGANNPYR. Residues 188-208 traverse the membrane as a helical segment; the sequence is FFELVPLYFTITTSIIILILI. Residues 209 to 234 are Cytoplasmic-facing; that stretch reads LVKMKKSKPSSLLPTESMRYNQQARE. Residues 235-255 form a helical membrane-spanning segment; that stretch reads FKIQLMKFVLIFIIFWLPATV. Residues 256–267 lie on the Extracellular side of the membrane; the sequence is LRTLEYFGIEKT. A helical transmembrane segment spans residues 268 to 288; sequence FFILLDAVSVSLQALANSLVW. Residues 289 to 318 are Cytoplasmic-facing; sequence ATSPQFLKLMKRKVVNKPNKQMEREYLINK.

Belongs to the G-protein coupled receptor 5 family.

Its subcellular location is the membrane. Its function is as follows. Receptor for cAMP. In Dictyostelium discoideum (Social amoeba), this protein is Cyclic AMP receptor-like protein F (crlF).